A 535-amino-acid polypeptide reads, in one-letter code: Ribonuclease Y (535 aa).

A helical membrane pass occupies residues 4-24 (IILLIVSALIGLILGYALISI). The segment at 118 to 141 (ENLSSKEKVLDSKEQSLTDKSKHI) is disordered. The region spanning 225-285 (TITSVHLPDD…IRREIARMTL (61 aa)) is the KH domain. The HD domain occupies 351-444 (VLRHSVEVGK…VAAADALSSA (94 aa)).

Belongs to the RNase Y family.

It is found in the cell membrane. In terms of biological role, endoribonuclease that initiates mRNA decay. In Streptococcus pyogenes serotype M1, this protein is Ribonuclease Y.